Here is a 362-residue protein sequence, read N- to C-terminus: Aminomethyltransferase (362 aa).

Belongs to the GcvT family. In terms of assembly, the glycine cleavage system is composed of four proteins: P, T, L and H.

The enzyme catalyses N(6)-[(R)-S(8)-aminomethyldihydrolipoyl]-L-lysyl-[protein] + (6S)-5,6,7,8-tetrahydrofolate = N(6)-[(R)-dihydrolipoyl]-L-lysyl-[protein] + (6R)-5,10-methylene-5,6,7,8-tetrahydrofolate + NH4(+). The glycine cleavage system catalyzes the degradation of glycine. This is Aminomethyltransferase from Bacillus subtilis (strain 168).